Here is a 263-residue protein sequence, read N- to C-terminus: Glutathione S-transferase F8, chloroplastic (263 aa).

A chloroplast-targeting transit peptide spans 1–49 (MGAIQARLPLFLSPPSIKHHTFLHSSSSNSNFKIRSNKSSSSSSSSIIM). A GST N-terminal domain is found at 50–131 (ASIKVHGVPM…YLAEEYSEKG (82 aa)). Residues 60-61 (ST), 89-90 (HK), 102-103 (QI), and 115-116 (ES) contribute to the glutathione site. One can recognise a GST C-terminal domain in the interval 139–263 (CKKVKATTNV…WAKVIDLQKQ (125 aa)). Threonine 177 is subject to Phosphothreonine.

This sequence belongs to the GST superfamily. Phi family. Isoform 1 is predominantly expressed in leaves and isoform 2 in roots.

It localises to the plastid. Its subcellular location is the chloroplast. It is found in the cytoplasm. The protein localises to the cytosol. The catalysed reaction is RX + glutathione = an S-substituted glutathione + a halide anion + H(+). In terms of biological role, in vitro, possesses glutathione S-transferase activity toward 1-chloro-2,4-dinitrobenzene (CDNB) and glutathione peroxidase activity toward cumene hydroperoxide and linoleic acid-13-hydroperoxide. May be involved in the conjugation of reduced glutathione to a wide number of exogenous and endogenous hydrophobic electrophiles and have a detoxification role against certain herbicides. This chain is Glutathione S-transferase F8, chloroplastic (GSTF8), found in Arabidopsis thaliana (Mouse-ear cress).